Here is a 471-residue protein sequence, read N- to C-terminus: dTDP-4-dehydro-6-deoxy-alpha-D-glucopyranose 2,3-dehydratase (471 aa).

Residues Trp-67, 155 to 159, Ser-193, Asn-238, Trp-288, Arg-351, 367 to 369, 372 to 373, and 405 to 408 contribute to the dTDP-4-dehydro-6-deoxy-alpha-D-glucose site; these read TRSNY, QCT, NY, and EGGR.

This sequence belongs to the hexose 2,3-dehydratase family. In terms of assembly, homodimer.

It carries out the reaction dTDP-4-dehydro-6-deoxy-alpha-D-glucose = dTDP-3,4-didehydro-2,6-dideoxy-alpha-D-glucose + H2O. Its pathway is antibiotic biosynthesis. In terms of biological role, involved in the biosynthesis of the 2,3,6-trideoxysugar L-epivancosamine, the terminal sugar added to the aglycone scaffold of chloroeremomycin, a member of the glycopeptide antibiotics vancomycin family. Catalyzes the removal of the hydroxyl group at position C-2 of the hexose ring of dTDP-4-dehydro-6-deoxy-alpha-D-glucopyranose, and the oxidation of the hydroxyl group at position C-3 to form a carbonyl functionality. The product of the reaction, dTDP-2,6-dideoxy-D-glycero-hex-2-enos-4-ulose, is a highly unstable diketosugar, which spontaneously forms dTDP-3,4-didehydro-2,6-dideoxy-alpha-D-glucose. The sequence is that of dTDP-4-dehydro-6-deoxy-alpha-D-glucopyranose 2,3-dehydratase from Amycolatopsis orientalis (Nocardia orientalis).